A 725-amino-acid polypeptide reads, in one-letter code: ATP-dependent DNA helicase II subunit 2 (725 aa).

The Ku domain occupies 232–478; that stretch reads LTLGDPQKYP…QQAMSDYVDA (247 aa).

Belongs to the ku80 family. In terms of assembly, heterodimer of mus-51/ku70 and mus-52/ku80.

The protein localises to the nucleus. Its subcellular location is the chromosome. The protein resides in the telomere. The enzyme catalyses ATP + H2O = ADP + phosphate + H(+). Functionally, single-stranded DNA-dependent ATP-dependent helicase. Involved in non-homologous end joining (NHEJ) DNA double strand break repair. DNA-binding is sequence-independent but has a high affinity to nicks in double-stranded DNA and to the ends of duplex DNA. Binds to naturally occurring chromosomal ends, and therefore provides chromosomal end protection. Required also for telomere recombination to repair telomeric ends in the absence of telomerase. ku70, of the ku70/ku80 heterodimer, binds to the stem loop of tlc1, the RNA component of telomerase. Involved in telomere maintenance. Interacts with telomeric repeats and subtelomeric sequences thereby controlling telomere length and protecting against subtelomeric rearrangement. Maintains telomeric chromatin, which is involved in silencing the expression of genes located at the telomere. Required for mating-type switching. This Neurospora crassa (strain ATCC 24698 / 74-OR23-1A / CBS 708.71 / DSM 1257 / FGSC 987) protein is ATP-dependent DNA helicase II subunit 2 (mus-52).